The chain runs to 544 residues: MAGKEIIFREDARRSLEKGVNALAEAVKITLGPKGRNVVLEKKFGSPMIVNDGVTIAREIELSDPFENMGAQLVKEVATKTNDVAGDGTTTACVLAQAIVREGLKNVAAGANPMIIKRGIEKAVDKAVEAIKNSAKTIESKSAIAQVATISANDEMIGNLIADAMEKVGKDGVITVEESKGTTTNLEIVEGMNFDRGYISPYMITDADKMEATLNDPYILITDKKISAVGDLLPLLEKVVQSGKPLLVIAEDVEGEALATLVLNKLRGTFQCVAVKAPGFGDRRKAMLQDIAILTGGTVITEEVGLKLDKATIDQLGRANKVRVKKEETIIVGGAGSTDEITKRVAQIKKQIEETTSEFDKEKLQERLAKLAGGVAVIQVGAATETEMKDKKLRIEDALNATRAAVEEGIVPGGGVAYISALKGLDGLDAGSLDEKTGIDIVRRALEEPLRQIASNAGLEGSVIVEKVKNADPGIGFNALTGEFVNMIDAGIVDPAKVTRTALQNAASIAAMILTTETLVAEKPEKEKDTMGGMGGMGGMGGMM.

ATP is bound by residues 30 to 33 (TLGP), 87 to 91 (DGTTT), Gly-414, 478 to 480 (NAL), and Asp-494.

The protein belongs to the chaperonin (HSP60) family. In terms of assembly, forms a cylinder of 14 subunits composed of two heptameric rings stacked back-to-back. Interacts with the co-chaperonin GroES.

Its subcellular location is the cytoplasm. The enzyme catalyses ATP + H2O + a folded polypeptide = ADP + phosphate + an unfolded polypeptide.. Its function is as follows. Together with its co-chaperonin GroES, plays an essential role in assisting protein folding. The GroEL-GroES system forms a nano-cage that allows encapsulation of the non-native substrate proteins and provides a physical environment optimized to promote and accelerate protein folding. This chain is Chaperonin GroEL, found in Pelotomaculum thermopropionicum (strain DSM 13744 / JCM 10971 / SI).